Here is a 450-residue protein sequence, read N- to C-terminus: Glucose-6-phosphate isomerase (450 aa).

The active-site Proton donor is Glu-290. Active-site residues include His-311 and Lys-425.

This sequence belongs to the GPI family.

It is found in the cytoplasm. It catalyses the reaction alpha-D-glucose 6-phosphate = beta-D-fructose 6-phosphate. It participates in carbohydrate biosynthesis; gluconeogenesis. Its pathway is carbohydrate degradation; glycolysis; D-glyceraldehyde 3-phosphate and glycerone phosphate from D-glucose: step 2/4. Catalyzes the reversible isomerization of glucose-6-phosphate to fructose-6-phosphate. The protein is Glucose-6-phosphate isomerase of Listeria innocua serovar 6a (strain ATCC BAA-680 / CLIP 11262).